A 661-amino-acid polypeptide reads, in one-letter code: Period circadian protein (661 aa).

Low complexity predominate over residues 1-34 (KVSDSAYSNSCSNSQSQRSGSSKSRLSGSHSSGS). The interval 1 to 151 (KVSDSAYSNS…RVEGVAKSEA (151 aa)) is disordered. Residues 53 to 66 (KRNKDKSRKKKKNK) carry the Nuclear localization signal motif. Over residues 53–66 (KRNKDKSRKKKKNK) the composition is skewed to basic residues. Residues 108 to 120 (ELQDQQHGEDHSE) show a composition bias toward basic and acidic residues. PAS domains are found at residues 223-358 (DSFC…ATPI) and 376-482 (FAIR…RVFQ). The segment at 582–661 (TNTSIAGTGG…VTLTESLLNK (80 aa)) is disordered. The segment covering 588–634 (GTGGTGTGTGTGTGTGTGTGTGTGTGTGTGTGTGTGTGTGTGTGNGT) has biased composition (gly residues). Repeat copies occupy residues 591–592 (GT), 593–594 (GT), 595–596 (GT), 597–598 (GT), 599–600 (GT), 601–602 (GT), 603–604 (GT), 605–606 (GT), 607–608 (GT), 609–610 (GT), 611–612 (GT), 613–614 (GT), 615–616 (GT), 617–618 (GT), 619–620 (GT), 621–622 (GT), 623–624 (GT), 625–626 (GT), 627–628 (GT), 629–630 (GT), 631–632 (GN), and 633–634 (GT). A 24 X 2 AA approximate tandem repeats of G-[TN] region spans residues 591–638 (GTGTGTGTGTGTGTGTGTGTGTGTGTGTGTGTGTGTGTGTGNGTNSGT). The stretch at 635–636 (NS) is one 23; approximate repeat. Low complexity predominate over residues 635–646 (NSGTTSSSRGGS). The stretch at 637 to 638 (GT) is repeat 24.

As to quaternary structure, forms a heterodimer with timeless (TIM); the complex then translocates into the nucleus. In terms of processing, phosphorylated with a circadian rhythmicity, probably by the double-time protein (dbt). Phosphorylation could be implicated in the stability of per monomer and in the formation of heterodimer per-tim.

It localises to the nucleus. Its subcellular location is the cytoplasm. It is found in the perinuclear region. In terms of biological role, essential for biological clock functions. Determines the period length of circadian and ultradian rhythms; an increase in PER dosage leads to shortened circadian rhythms and a decrease leads to lengthened circadian rhythms. Essential for the circadian rhythmicity of locomotor activity, eclosion behavior, and for the rhythmic component of the male courtship song that originates in the thoracic nervous system. The biological cycle depends on the rhythmic formation and nuclear localization of the TIM-PER complex. Light induces the degradation of TIM, which promotes elimination of PER. Nuclear activity of the heterodimer coordinatively regulates PER and TIM transcription through a negative feedback loop. Behaves as a negative element in circadian transcriptional loop. Does not appear to bind DNA, suggesting indirect transcriptional inhibition. In Drosophila sechellia (Fruit fly), this protein is Period circadian protein (per).